The primary structure comprises 573 residues: Phosphoenolpyruvate-protein phosphotransferase (573 aa).

His190 acts as the Tele-phosphohistidine intermediate in catalysis. Arg297 and Arg334 together coordinate phosphoenolpyruvate. Mg(2+) is bound by residues Glu433 and Asp457. Residues 456–457 and Arg467 contribute to the phosphoenolpyruvate site; that span reads ND. The active-site Proton donor is Cys504.

This sequence belongs to the PEP-utilizing enzyme family. In terms of assembly, homodimer. The cofactor is Mg(2+).

It localises to the cytoplasm. It catalyses the reaction L-histidyl-[protein] + phosphoenolpyruvate = N(pros)-phospho-L-histidyl-[protein] + pyruvate. In terms of biological role, general (non sugar-specific) component of the phosphoenolpyruvate-dependent sugar phosphotransferase system (sugar PTS). This major carbohydrate active-transport system catalyzes the phosphorylation of incoming sugar substrates concomitantly with their translocation across the cell membrane. Enzyme I transfers the phosphoryl group from phosphoenolpyruvate (PEP) to the phosphoryl carrier protein (HPr). In Borreliella burgdorferi (strain ATCC 35210 / DSM 4680 / CIP 102532 / B31) (Borrelia burgdorferi), this protein is Phosphoenolpyruvate-protein phosphotransferase (ptsI).